The following is a 277-amino-acid chain: Shikimate dehydrogenase (NADP(+)) (277 aa).

Shikimate-binding positions include 20–22 (SLS) and T67. K71 serves as the catalytic Proton acceptor. D83 provides a ligand contact to NADP(+). Positions 92 and 107 each coordinate shikimate. NADP(+) contacts are provided by residues 131–135 (GAGGV) and I219. Y221 lines the shikimate pocket. G242 is a binding site for NADP(+).

Belongs to the shikimate dehydrogenase family. As to quaternary structure, homodimer.

The catalysed reaction is shikimate + NADP(+) = 3-dehydroshikimate + NADPH + H(+). It functions in the pathway metabolic intermediate biosynthesis; chorismate biosynthesis; chorismate from D-erythrose 4-phosphate and phosphoenolpyruvate: step 4/7. Its function is as follows. Involved in the biosynthesis of the chorismate, which leads to the biosynthesis of aromatic amino acids. Catalyzes the reversible NADPH linked reduction of 3-dehydroshikimate (DHSA) to yield shikimate (SA). The polypeptide is Shikimate dehydrogenase (NADP(+)) (Pelobacter propionicus (strain DSM 2379 / NBRC 103807 / OttBd1)).